We begin with the raw amino-acid sequence, 73 residues long: Large ribosomal subunit protein bL31 (73 aa).

Positions 16, 18, 38, and 41 each coordinate Zn(2+).

It belongs to the bacterial ribosomal protein bL31 family. Type A subfamily. Part of the 50S ribosomal subunit. The cofactor is Zn(2+).

Functionally, binds the 23S rRNA. This chain is Large ribosomal subunit protein bL31, found in Vibrio vulnificus (strain YJ016).